Consider the following 356-residue polypeptide: MTRPVVASIDLLALRQNLQIVRRAAPGSRLWAVDKDNAYGHGVARVWSALSAADGFALLNLEEAILLREQGWKGPILLLEGFFHADELAVLDQYRLPTSVHSNWQIKALQQAKLRAPLDIYLKVNSGMNRLGFMPERVHTVWQQLRAISNVGEMTLMSHFAEAENPQGIVEPMRRIEQAAEGLDCPRSLANSAATLWHPEAHFDWVRPGIVLYGASPSGQWQDIANTGLKPVMTLRSEIIGVQNLRPGEAIGYGGLYRTTQEQRIGIVACGYADGYPRVAPSGTPVLVDGVRTTTVGRVSMDMLAVDLTPCPQAGIGAPVELWGKEIKIDDVAASSGTVGYELMCALAPRVPVVTL.

Lys35 functions as the Proton acceptor; specific for D-alanine in the catalytic mechanism. The residue at position 35 (Lys35) is an N6-(pyridoxal phosphate)lysine. Substrate is bound at residue Arg130. Catalysis depends on Tyr253, which acts as the Proton acceptor; specific for L-alanine. A substrate-binding site is contributed by Met301.

This sequence belongs to the alanine racemase family. The cofactor is pyridoxal 5'-phosphate.

The enzyme catalyses L-alanine = D-alanine. Functionally, isomerizes L-alanine to D-alanine which is then oxidized to pyruvate by DadA. The chain is Alanine racemase, catabolic (dadB) from Klebsiella aerogenes (Enterobacter aerogenes).